The following is a 282-amino-acid chain: Phycocyanobilin lyase subunit beta (282 aa).

The protein belongs to the CpcE/RpcE/PecE family. CpcE and CpcF associate to form a lyase.

In terms of biological role, required for the chromophorylation of the CpcA gene product. The chain is Phycocyanobilin lyase subunit beta (cpcF1) from Pseudanabaena tenuis (strain PCC 7409).